The primary structure comprises 361 residues: Serpentine receptor class X 45 (361 aa).

The next 7 helical transmembrane spans lie at L20 to I40, A58 to F78, F92 to L112, T133 to I153, M176 to I196, L242 to L262, and L278 to F298. Residue N317 is glycosylated (N-linked (GlcNAc...) asparagine).

It belongs to the G-protein coupled receptor 1 family.

The protein localises to the cell membrane. The sequence is that of Serpentine receptor class X 45 (srx-45) from Caenorhabditis elegans.